A 309-amino-acid chain; its full sequence is Peptidyl-prolyl cis-trans isomerase 9 (309 aa).

Residues 8-173 (FLDISVDENL…AKVLISNCGE (166 aa)) enclose the PPIase cyclophilin-type domain. Composition is skewed to basic and acidic residues over residues 217–229 (NEKK…DKRR), 239–265 (RSHE…RDEN), 280–289 (ERSATPEHWR), and 296–309 (WVHD…EDLV). Residues 217-309 (NEKKHEMRND…SHKHPEEDLV (93 aa)) form a disordered region.

It belongs to the cyclophilin-type PPIase family. As to expression, co-expressed with pdi-1 in the syncytial hypodermis.

It carries out the reaction [protein]-peptidylproline (omega=180) = [protein]-peptidylproline (omega=0). PPIases accelerate the folding of proteins. It catalyzes the cis-trans isomerization of proline imidic peptide bonds in oligopeptides. Thought to function as a catalyst in the folding and modification of cuticle collagens. This chain is Peptidyl-prolyl cis-trans isomerase 9 (cyn-9), found in Caenorhabditis elegans.